A 149-amino-acid chain; its full sequence is Deoxyuridine 5'-triphosphate nucleotidohydrolase (149 aa).

Residues 68-70 (RSG), asparagine 81, and 85-87 (LID) each bind substrate.

The protein belongs to the dUTPase family. Mg(2+) is required as a cofactor.

It catalyses the reaction dUTP + H2O = dUMP + diphosphate + H(+). The protein operates within pyrimidine metabolism; dUMP biosynthesis; dUMP from dCTP (dUTP route): step 2/2. In terms of biological role, this enzyme is involved in nucleotide metabolism: it produces dUMP, the immediate precursor of thymidine nucleotides and it decreases the intracellular concentration of dUTP so that uracil cannot be incorporated into DNA. The polypeptide is Deoxyuridine 5'-triphosphate nucleotidohydrolase (Nitrosospira multiformis (strain ATCC 25196 / NCIMB 11849 / C 71)).